Consider the following 505-residue polypeptide: ATP synthase subunit alpha (505 aa).

Residue 171–178 participates in ATP binding; that stretch reads GDRQTGKT.

It belongs to the ATPase alpha/beta chains family. F-type ATPases have 2 components, CF(1) - the catalytic core - and CF(0) - the membrane proton channel. CF(1) has five subunits: alpha(3), beta(3), gamma(1), delta(1), epsilon(1). CF(0) has three main subunits: a(1), b(2) and c(9-12). The alpha and beta chains form an alternating ring which encloses part of the gamma chain. CF(1) is attached to CF(0) by a central stalk formed by the gamma and epsilon chains, while a peripheral stalk is formed by the delta and b chains.

Its subcellular location is the cell inner membrane. The enzyme catalyses ATP + H2O + 4 H(+)(in) = ADP + phosphate + 5 H(+)(out). In terms of biological role, produces ATP from ADP in the presence of a proton gradient across the membrane. The alpha chain is a regulatory subunit. In Aliarcobacter butzleri (strain RM4018) (Arcobacter butzleri), this protein is ATP synthase subunit alpha.